Consider the following 520-residue polypeptide: Putative lipase ATG15 (520 aa).

At 1 to 14 (MLHKSPSRKRFASP) the chain is on the cytoplasmic side. Residues 15-35 (LHLGCILTLTVLCLIAYYFAL) traverse the membrane as a helical; Signal-anchor for type II membrane protein segment. Residues 36–520 (PDYLSVGKSS…WLGFCTKYEL (485 aa)) are Lumenal-facing. N-linked (GlcNAc...) asparagine glycans are attached at residues asparagine 173, asparagine 202, and asparagine 208. Serine 332 (charge relay system) is an active-site residue.

Belongs to the AB hydrolase superfamily. Lipase family. In terms of assembly, binds to both phosphatidylinositol (PI) and phosphatidylinositol 3,5-bisphosphate (PIP2). Post-translationally, glycosylated.

It is found in the endosome. The protein localises to the multivesicular body membrane. It localises to the prevacuolar compartment membrane. It catalyses the reaction a triacylglycerol + H2O = a diacylglycerol + a fatty acid + H(+). Its function is as follows. Lipase which is essential for lysis of subvacuolar cytoplasm to vacuole targeted bodies and intravacuolar autophagic bodies. Involved in the lysis of intravacuolar multivesicular body (MVB) vesicles. The intravacuolar membrane disintegration by ATG15 is critical to life span extension. This Saccharomyces cerevisiae (strain ATCC 204508 / S288c) (Baker's yeast) protein is Putative lipase ATG15 (ATG15).